The sequence spans 219 residues: UPF0502 protein GSU0233 (219 aa).

It belongs to the UPF0502 family.

The sequence is that of UPF0502 protein GSU0233 from Geobacter sulfurreducens (strain ATCC 51573 / DSM 12127 / PCA).